A 317-amino-acid polypeptide reads, in one-letter code: MARRSKGRFIDGIVLLDKATGMSSNFALQRVKRFFNANKAGHTGALDPLATGMLPVCLGEATKFSQHLLDSDKRYLVTAKLGQRTDTSDSDGEVVQTRPLEFTEAQLMSALEHFRGDTQQVPSMYSALKYQGQPLYKYAREGIEVPREARPITVFELNFISLEGDELTLDIHCSKGTYIRTIIDDLGEMLGCGAHVIMLRRTQVAHYPYDKMVTLEQLEALVAKAQEEQLDSSSLLDSLLLPMDTAVADFPEVNVPDASAAYLMQGQAVRVSGLVADKLVRITLGTERRFVGIGKMNEDGLLAPKRLVVIHDQAKAS.

Aspartate 47 functions as the Nucleophile in the catalytic mechanism.

This sequence belongs to the pseudouridine synthase TruB family. Type 1 subfamily.

The catalysed reaction is uridine(55) in tRNA = pseudouridine(55) in tRNA. Responsible for synthesis of pseudouridine from uracil-55 in the psi GC loop of transfer RNAs. This chain is tRNA pseudouridine synthase B, found in Shewanella sp. (strain MR-7).